Reading from the N-terminus, the 99-residue chain is Large ribosomal subunit protein bL27 (99 aa).

Positions 1–10 are excised as a propeptide; sequence MKLIFDIQLF.

Belongs to the bacterial ribosomal protein bL27 family. In terms of processing, the N-terminus is cleaved by ribosomal processing cysteine protease Prp.

The protein is Large ribosomal subunit protein bL27 of Caldicellulosiruptor saccharolyticus (strain ATCC 43494 / DSM 8903 / Tp8T 6331).